The chain runs to 804 residues: Ribonucleoside-diphosphate reductase large subunit (804 aa).

Residues 1-92 (MYVLNRKGEE…TDNLHKNTSD (92 aa)) form the ATP-cone domain. ATP is bound by residues 5-6 (NR), 11-17 (EDISFDQ), Thr-53, and Asp-57. Ser-216 is a GDP binding site. Cys-217 and Cys-442 are oxidised to a cystine. Residues 225-227 (DSI), Lys-242, Arg-255, and 262-263 (RG) contribute to the dTTP site. Residue Asn-425 coordinates GDP. The Proton acceptor role is filled by Asn-425. Cys-427 functions as the Cysteine radical intermediate in the catalytic mechanism. GDP contacts are provided by residues Glu-429 and 603-606 (TAST). The Proton acceptor role is filled by Glu-429.

The protein belongs to the ribonucleoside diphosphate reductase large chain family. In terms of assembly, heterodimer of a large and a small subunit.

It carries out the reaction a 2'-deoxyribonucleoside 5'-diphosphate + [thioredoxin]-disulfide + H2O = a ribonucleoside 5'-diphosphate + [thioredoxin]-dithiol. Under complex allosteric control mediated by deoxynucleoside triphosphates and ATP binding to separate specificity and activation sites on the large subunit. The type of nucleotide bound at the specificity site determines substrate preference. It seems probable that ATP makes the enzyme reduce CDP and UDP, dGTP favors ADP reduction and dTTP favors GDP reduction. Stimulated by ATP and inhibited by dATP binding to the activity site. Functionally, provides the precursors necessary for DNA synthesis. Catalyzes the biosynthesis of deoxyribonucleotides from the corresponding ribonucleotides. This is Ribonucleoside-diphosphate reductase large subunit (RNR1) from Plasmodium falciparum (isolate FCR-3 / Gambia).